The sequence spans 134 residues: Large ribosomal subunit protein bL20 (134 aa).

Belongs to the bacterial ribosomal protein bL20 family.

Functionally, binds directly to 23S ribosomal RNA and is necessary for the in vitro assembly process of the 50S ribosomal subunit. It is not involved in the protein synthesizing functions of that subunit. This Allorhizobium ampelinum (strain ATCC BAA-846 / DSM 112012 / S4) (Agrobacterium vitis (strain S4)) protein is Large ribosomal subunit protein bL20.